Reading from the N-terminus, the 484-residue chain is Replication factor C large subunit (484 aa).

46–53 lines the ATP pocket; it reads GPPGSGKT. Over residues 463–478 the composition is skewed to basic and acidic residues; it reads NADTKEKEKKDPKKQA. Residues 463–484 form a disordered region; the sequence is NADTKEKEKKDPKKQATLDSFF.

This sequence belongs to the activator 1 small subunits family. RfcL subfamily. In terms of assembly, heteromultimer composed of small subunits (RfcS) and large subunits (RfcL).

In terms of biological role, part of the RFC clamp loader complex which loads the PCNA sliding clamp onto DNA. The protein is Replication factor C large subunit of Methanococcus maripaludis (strain C6 / ATCC BAA-1332).